Consider the following 290-residue polypeptide: Ribosomal RNA small subunit methyltransferase A (290 aa).

S-adenosyl-L-methionine is bound by residues Asn27, Leu29, Gly54, Glu75, Asp100, and Asn125.

This sequence belongs to the class I-like SAM-binding methyltransferase superfamily. rRNA adenine N(6)-methyltransferase family. RsmA subfamily.

The protein localises to the cytoplasm. The enzyme catalyses adenosine(1518)/adenosine(1519) in 16S rRNA + 4 S-adenosyl-L-methionine = N(6)-dimethyladenosine(1518)/N(6)-dimethyladenosine(1519) in 16S rRNA + 4 S-adenosyl-L-homocysteine + 4 H(+). Its function is as follows. Specifically dimethylates two adjacent adenosines (A1518 and A1519) in the loop of a conserved hairpin near the 3'-end of 16S rRNA in the 30S particle. May play a critical role in biogenesis of 30S subunits. The chain is Ribosomal RNA small subunit methyltransferase A from Streptococcus agalactiae serotype V (strain ATCC BAA-611 / 2603 V/R).